The chain runs to 703 residues: Calpain-8 (703 aa).

A Calpain catalytic domain is found at 45-344 (LFKDPEFPAC…FSRLEICNLS (300 aa)). Catalysis depends on residues C105, H262, and N286. A domain III region spans residues 356 to 379 (WNLVLFNGHWTRGSTAGGCQNYPA). EF-hand domains follow at residues 575–610 (FNINTCREMISLLDSNGTGTLGAVEFKTLWLKIQKY), 618–640 (DYNHSGTIDAHEMRTALRKAGFT), and 670–703 (IRLETLFKLFSLLDEDKDGMVQLSLAEWLCCVLV). Ca(2+) is bound by residues D588, N590, T592, T594, E599, D618, N620, S622, T624, and E629.

Belongs to the peptidase C2 family. Monomer and homooligomer. Interacts with COPS1/GPS1, COPB1, EYA2, NME2, NME4 and TOMM70. Ca(2+) serves as cofactor. Undergoes autolytic cleavage between Ala-5 and Ala-6 which gives rise to fragments extending from Ala-6 to the C-terminus, Ala-6 to the EF-hand 2 domain and from Ala-6 to the beginning of domain III. As to expression, stomach.

The protein localises to the cytoplasm. It localises to the golgi apparatus. The catalysed reaction is Broad endopeptidase specificity.. Functionally, calcium-regulated non-lysosomal thiol-protease. Involved in membrane trafficking in the gastric surface mucus cells (pit cells) and may involve the membrane trafficking of mucus cells via interactions with coat protein. Proteolytically cleaves the beta-subunit of coatomer complex. The chain is Calpain-8 (CAPN8) from Homo sapiens (Human).